Consider the following 269-residue polypeptide: NAD kinase (269 aa).

Aspartate 45 (proton acceptor) is an active-site residue. NAD(+)-binding positions include 45–46 (DG), 122–123 (NE), arginine 149, aspartate 151, and alanine 186.

It belongs to the NAD kinase family. A divalent metal cation serves as cofactor.

The protein localises to the cytoplasm. It catalyses the reaction NAD(+) + ATP = ADP + NADP(+) + H(+). In terms of biological role, involved in the regulation of the intracellular balance of NAD and NADP, and is a key enzyme in the biosynthesis of NADP. Catalyzes specifically the phosphorylation on 2'-hydroxyl of the adenosine moiety of NAD to yield NADP. This is NAD kinase from Staphylococcus epidermidis (strain ATCC 35984 / DSM 28319 / BCRC 17069 / CCUG 31568 / BM 3577 / RP62A).